A 116-amino-acid chain; its full sequence is Iron-sulfur cluster insertion protein ErpA (116 aa).

Iron-sulfur cluster contacts are provided by Cys44, Cys108, and Cys110.

The protein belongs to the HesB/IscA family. In terms of assembly, homodimer. The cofactor is iron-sulfur cluster.

Functionally, required for insertion of 4Fe-4S clusters for at least IspG. The sequence is that of Iron-sulfur cluster insertion protein ErpA from Pseudomonas fluorescens (strain ATCC BAA-477 / NRRL B-23932 / Pf-5).